We begin with the raw amino-acid sequence, 599 residues long: Kelch-like protein 24a (599 aa).

The region spanning 65–132 (TDVIISVQGR…VYTGRACITT (68 aa)) is the BTB domain. The region spanning 167–269 (CLGIQRFADA…HPNYFVQTVE (103 aa)) is the BACK domain. Kelch repeat units follow at residues 313-362 (VIVV…ALRN), 364-406 (IILS…VLLG), 407-453 (KVYA…SCAG), 455-501 (LFVI…SLNH), 503-543 (IYVC…VCNG), and 545-591 (IYIL…TVHR).

As to quaternary structure, forms homodimers. Component of the BCR(KLHL24) E3 ubiquitin ligase complex.

Its subcellular location is the perikaryon. The protein resides in the cell projection. It localises to the axon. It is found in the cytoplasm. The protein localises to the cell junction. Its subcellular location is the desmosome. The protein resides in the adherens junction. Functionally, necessary to maintain the balance between intermediate filament stability and degradation, a process that is essential for skin integrity. Reduces kainate receptor-mediated currents in brain neurons, most probably by modulating channel properties. It is required for proper heart development. The chain is Kelch-like protein 24a from Danio rerio (Zebrafish).